The sequence spans 201 residues: Imidazoleglycerol-phosphate dehydratase (201 aa).

This sequence belongs to the imidazoleglycerol-phosphate dehydratase family.

The protein resides in the cytoplasm. It catalyses the reaction D-erythro-1-(imidazol-4-yl)glycerol 3-phosphate = 3-(imidazol-4-yl)-2-oxopropyl phosphate + H2O. It functions in the pathway amino-acid biosynthesis; L-histidine biosynthesis; L-histidine from 5-phospho-alpha-D-ribose 1-diphosphate: step 6/9. This chain is Imidazoleglycerol-phosphate dehydratase, found in Synechococcus sp. (strain CC9902).